Consider the following 220-residue polypeptide: Deoxyribose-phosphate aldolase (220 aa).

Aspartate 89 serves as the catalytic Proton donor/acceptor. The active-site Schiff-base intermediate with acetaldehyde is the lysine 151. The active-site Proton donor/acceptor is lysine 180.

The protein belongs to the DeoC/FbaB aldolase family. DeoC type 1 subfamily.

The protein resides in the cytoplasm. It carries out the reaction 2-deoxy-D-ribose 5-phosphate = D-glyceraldehyde 3-phosphate + acetaldehyde. The protein operates within carbohydrate degradation; 2-deoxy-D-ribose 1-phosphate degradation; D-glyceraldehyde 3-phosphate and acetaldehyde from 2-deoxy-alpha-D-ribose 1-phosphate: step 2/2. Its function is as follows. Catalyzes a reversible aldol reaction between acetaldehyde and D-glyceraldehyde 3-phosphate to generate 2-deoxy-D-ribose 5-phosphate. This is Deoxyribose-phosphate aldolase from Staphylococcus haemolyticus (strain JCSC1435).